A 371-amino-acid chain; its full sequence is Maltose/maltodextrin import ATP-binding protein MalK (371 aa).

Residues 4-234 enclose the ABC transporter domain; the sequence is VQLQNVTKAW…PADRFVAGFI (231 aa). 36–43 lines the ATP pocket; the sequence is GPSGCGKS.

Belongs to the ABC transporter superfamily. Maltooligosaccharide importer (TC 3.A.1.1.1) family. As to quaternary structure, the complex is composed of two ATP-binding proteins (MalK), two transmembrane proteins (MalG and MalK) and a solute-binding protein (MalE).

The protein localises to the cell inner membrane. It catalyses the reaction D-maltose(out) + ATP + H2O = D-maltose(in) + ADP + phosphate + H(+). Part of the ABC transporter complex MalEFGK involved in maltose/maltodextrin import. Responsible for energy coupling to the transport system. The protein is Maltose/maltodextrin import ATP-binding protein MalK of Escherichia coli O157:H7.